A 184-amino-acid polypeptide reads, in one-letter code: Photosystem I assembly protein Ycf4 (184 aa).

A run of 2 helical transmembrane segments spans residues 22–42 (FFWA…GTSS) and 57–77 (ILFF…LFIS).

This sequence belongs to the Ycf4 family.

The protein localises to the plastid. Its subcellular location is the chloroplast thylakoid membrane. In terms of biological role, seems to be required for the assembly of the photosystem I complex. This is Photosystem I assembly protein Ycf4 from Nandina domestica (Heavenly bamboo).